The primary structure comprises 421 residues: MAVDVAEYHLSVIKSPPGWEVGVYAAGALALLGIAAVSLWKLWTSGSFPSPSPFPNYDYRYLQQKYGESCAEAREKRVPAWNAQRASTRGPPSRKGSLSIEDTFESISELGPLELMGRELDLAPYGTLRKSQSADSLNSISSVSNTFGQDFTLGQVEVSMEYDTASHTLNVAVMQGKDLLEREEASFESCFMRVSLLPDEQIVGISRIQRNAYSIFFDEKFSIPLDPTALEEKSLRFSVFGIDEDERNVSTGVVELKLSVLDLPLQPFSGWLYLQDQNKAADAVGEILLSLSYLPTAERLTVVVVKAKNLIWTNDKTTADPFVKVYLLQDGRKMSKKKTAVKRDDPNPVFNEAMIFSVPAIVLQDLSLRVTVAESSSDGRGDNVGHVIIGPSASGMGTTHWNQMLATLRRPVSMWHAVRRN.

The Vesicular portion of the chain corresponds to 1-18 (MAVDVAEYHLSVIKSPPG). The helical transmembrane segment at 19–39 (WEVGVYAAGALALLGIAAVSL) threads the bilayer. The Cytoplasmic portion of the chain corresponds to 40-421 (WKLWTSGSFP…VSMWHAVRRN (382 aa)). Phosphoserine is present on residues S97, S99, and S214. C2 domains lie at 152-272 (TLGQ…SGWL) and 283-416 (AVGE…SMWH).

It belongs to the synaptotagmin family. In terms of assembly, homodimer. Can also form heterodimers. Interacts with SYT1. In terms of processing, phosphorylation of Ser-97 is required for mossy-fiber long-term potentiation.

It localises to the cytoplasmic vesicle. The protein localises to the secretory vesicle. It is found in the synaptic vesicle membrane. Its function is as follows. Synaptic vesicle phosphoprotein that enhances spontaneous neurotransmitter release but does not effect induced neurotransmitter release. Unlike other synaptotagmins, it does not bind Ca(2+) or phospholipids. Essential for mossy-fiber long-term potentiation in the hippocampus. This Homo sapiens (Human) protein is Synaptotagmin-12 (SYT12).